A 164-amino-acid chain; its full sequence is Rhomboid-related protein 1 (164 aa).

A run of 4 helical transmembrane segments spans residues 10-30 (GFNA…HGVL), 32-52 (ISLL…ITDM), 56-76 (VVGG…NVVM), and 120-140 (PSFM…LTIL). Serine 60 (nucleophile) is an active-site residue. The active site involves histidine 125.

The protein belongs to the peptidase S54 family.

It is found in the membrane. The catalysed reaction is Cleaves type-1 transmembrane domains using a catalytic dyad composed of serine and histidine that are contributed by different transmembrane domains.. Functionally, may be involved in regulated intramembrane proteolysis and the subsequent release of functional polypeptides from their membrane anchors. The polypeptide is Rhomboid-related protein 1 (Rhbdl1) (Rattus norvegicus (Rat)).